Reading from the N-terminus, the 361-residue chain is Peptide chain release factor 1 (361 aa).

N5-methylglutamine is present on Q237. Residues 287–297 (KQQKEQSDTRK) show a composition bias toward basic and acidic residues. Residues 287–313 (KQQKEQSDTRKSLVGSGDRSERIRTYN) are disordered.

The protein belongs to the prokaryotic/mitochondrial release factor family. Methylated by PrmC. Methylation increases the termination efficiency of RF1.

It is found in the cytoplasm. Its function is as follows. Peptide chain release factor 1 directs the termination of translation in response to the peptide chain termination codons UAG and UAA. This Francisella tularensis subsp. novicida (strain U112) protein is Peptide chain release factor 1.